Here is a 38-residue protein sequence, read N- to C-terminus: Toxin Bcg III 31.16 (38 aa).

3 disulfide bridges follow: Cys-4–Cys-37, Cys-6–Cys-30, and Cys-20–Cys-38.

It belongs to the sea anemone type 3 (BDS) potassium channel toxin family.

It localises to the secreted. It is found in the nematocyst. Its function is as follows. Possible modulator of crustacean voltage-gated sodium channels (Nav). This is Toxin Bcg III 31.16 from Bunodosoma cangicum (Sea anemone).